The sequence spans 299 residues: tRNA dimethylallyltransferase (299 aa).

13-20 lines the ATP pocket; sequence GPTASGKT. 15 to 20 is a binding site for substrate; sequence TASGKT. Residues 38 to 41 form an interaction with substrate tRNA region; the sequence is DSRQ.

Belongs to the IPP transferase family. Monomer. It depends on Mg(2+) as a cofactor.

It catalyses the reaction adenosine(37) in tRNA + dimethylallyl diphosphate = N(6)-dimethylallyladenosine(37) in tRNA + diphosphate. Functionally, catalyzes the transfer of a dimethylallyl group onto the adenine at position 37 in tRNAs that read codons beginning with uridine, leading to the formation of N6-(dimethylallyl)adenosine (i(6)A). This is tRNA dimethylallyltransferase from Prochlorococcus marinus (strain MIT 9301).